The sequence spans 512 residues: Neuronal acetylcholine receptor subunit alpha-3 (512 aa).

A signal peptide spans 1–23 (MNSASRITLFFLLTVLITQECLS). Topologically, residues 24-242 (SKGEDRLFRR…PLFYTINLII (219 aa)) are extracellular. 2 N-linked (GlcNAc...) asparagine glycosylation sites follow: asparagine 47 and asparagine 164. Intrachain disulfides connect cysteine 151–cysteine 165 and cysteine 215–cysteine 216. A helical transmembrane segment spans residues 243–258 (PCLLISFLTILVFYLP). Residues 259–260 (SD) lie on the Cytoplasmic side of the membrane. A helical membrane pass occupies residues 261-277 (CGEKVTLCISVLLSLTV). Glutamate 263 provides a ligand contact to Na(+). Residues 278-299 (FLLVITETIPSTSLVIPLIGEY) are Extracellular-facing. The chain crosses the membrane as a helical span at residues 300 to 318 (LLFTMIFVTLSIVITVFVL). At 319–482 (NVHYRTPMTH…EDDWKYVAMV (164 aa)) the chain is on the cytoplasmic side. The interval 356–389 (ESSGKGGGEIAGSSGTGGGRGAEGKKMKSSASQQ) is disordered. Positions 359–376 (GKGGGEIAGSSGTGGGRG) are enriched in gly residues. A helical membrane pass occupies residues 483 to 501 (IDRIFLWVFVLVCVLGTLG). At 502–512 (LFLQPLIGFFS) the chain is on the extracellular side.

The protein belongs to the ligand-gated ion channel (TC 1.A.9) family. Acetylcholine receptor (TC 1.A.9.1) subfamily. Alpha-3/CHRNA3 sub-subfamily. Neuronal AChR is composed of two different types of subunits: alpha and beta. CHRNA3/Alpha-3 subunit can be combined to CHRNB2/beta-2 or CHRNB4/beta-4 to give rise to functional receptors. In terms of tissue distribution, expressed in retina and brain.

The protein resides in the synaptic cell membrane. The protein localises to the cell membrane. It localises to the endoplasmic reticulum. Its subcellular location is the golgi apparatus. The enzyme catalyses K(+)(in) = K(+)(out). The catalysed reaction is Na(+)(in) = Na(+)(out). It catalyses the reaction Ca(2+)(in) = Ca(2+)(out). Its activity is regulated as follows. Activated by a myriad of ligands such as acetylcholine, cytisine, nicotine, choline and epibatidine. The heteropentamer CHRNA3:CHRNB2 activity is blocked by alpha-conotoxins ImI, ImII, PnIA, GID and MII. The heteropentamer CHRNA3:CHRNB4 activity is blocked by the alpha-conotoxin ImI and AuIB. In terms of biological role, component of neuronal acetylcholine receptors (nAChRs) that function as pentameric, ligand-gated cation channels with high calcium permeability among other activities. nAChRs are excitatory neurotrasnmitter receptors formed by a collection of nAChR subunits known to mediate synaptic transmission in the nervous system and the neuromuscular junction. Each nAchR subunit confers differential attributes to channel properties, including activation, deactivation and desensitization kinetics, pH sensitivity, cation permeability, and binding to allosteric modulators. CHRNA3 forms heteropentameric neuronal acetylcholine receptors with CHRNB2 and CHRNB4. CHRNA3:CHRNB4 being predominant in neurons of the autonomic ganglia, it is known as ganglionic nicotinic receptor. CHRNA3:CHRNB4 also plays an important role in the habenulo-interpeduncular tract, modulating the mesolimbic dopamine system and affecting reward circuits and addiction. Hypothalamic CHRNA3:CHRNB4 nAChR activation by nicotine leads to activation of POMC neurons and a decrease in food intake. Also expressed in the urothelium where it modulates reflex bladder activity by increasing intracellular calcium through extracellular influx and basal ATP release. This Carassius auratus (Goldfish) protein is Neuronal acetylcholine receptor subunit alpha-3 (chrna3).